The following is a 305-amino-acid chain: Energy-coupling factor transporter ATP-binding protein EcfA2 (305 aa).

Residues Leu-13–Glu-262 form the ABC transporter domain. Gly-55–Ser-62 provides a ligand contact to ATP.

This sequence belongs to the ABC transporter superfamily. Energy-coupling factor EcfA family. Forms a stable energy-coupling factor (ECF) transporter complex composed of 2 membrane-embedded substrate-binding proteins (S component), 2 ATP-binding proteins (A component) and 2 transmembrane proteins (T component).

It localises to the cell membrane. Functionally, ATP-binding (A) component of a common energy-coupling factor (ECF) ABC-transporter complex. Unlike classic ABC transporters this ECF transporter provides the energy necessary to transport a number of different substrates. This chain is Energy-coupling factor transporter ATP-binding protein EcfA2, found in Spiroplasma kunkelii.